The following is a 354-amino-acid chain: MKMFIIMLMTFSVIACFYAGVGTGEPLVPALIIMGDSVVDAGNNNRLNTLIKANFPPYGRDFLAHNATGRFSNGKLATDFTAESLGFTSYPVPYLSQEANGTNLLTGANFASGASGYDDGTAIFYNAITLNQQLKNYKEYQNKVTNIVGSERANKIFSGAIHLLSTGSSDFLQSYYINPILNRIFTPDQYSDRLMKPYSTFVQNLYDLGARKIGVTTLPPLGCLPAAITLFGETGNNNTCVERLNQDAVSFNTKLNNTSMNLTNNLPGLKLVVFDIYNPLLNMAMNPVENGFFESRRACCGTGTVETSFLCNARSVGTCSNATNYVFWDGFHPSEAANRVIANNLLVQGIPLIS.

Positions 1-24 are cleaved as a signal peptide; it reads MKMFIIMLMTFSVIACFYAGVGTG. Serine 37 (nucleophile) is an active-site residue. N-linked (GlcNAc...) asparagine glycosylation is found at asparagine 66, asparagine 100, asparagine 237, asparagine 256, asparagine 257, asparagine 261, and asparagine 321. Residues aspartate 329 and histidine 332 contribute to the active site.

Belongs to the 'GDSL' lipolytic enzyme family.

The protein localises to the secreted. The polypeptide is GDSL esterase/lipase At5g03820 (Arabidopsis thaliana (Mouse-ear cress)).